Reading from the N-terminus, the 457-residue chain is Siroheme synthase (457 aa).

A precorrin-2 dehydrogenase /sirohydrochlorin ferrochelatase region spans residues Met-1 to Met-204. NAD(+) is bound by residues His-22–Ile-23 and Pro-43–Asp-44. The residue at position 129 (Ser-129) is a Phosphoserine. The segment at Gly-216–Leu-457 is uroporphyrinogen-III C-methyltransferase. Pro-225 is an S-adenosyl-L-methionine binding site. The Proton acceptor role is filled by Asp-248. The Proton donor role is filled by Lys-270. S-adenosyl-L-methionine is bound by residues Gly-301–Asp-303, Ile-306, Thr-331–Ala-332, Met-383, and Gly-412.

It in the N-terminal section; belongs to the precorrin-2 dehydrogenase / sirohydrochlorin ferrochelatase family. In the C-terminal section; belongs to the precorrin methyltransferase family.

The enzyme catalyses uroporphyrinogen III + 2 S-adenosyl-L-methionine = precorrin-2 + 2 S-adenosyl-L-homocysteine + H(+). It catalyses the reaction precorrin-2 + NAD(+) = sirohydrochlorin + NADH + 2 H(+). The catalysed reaction is siroheme + 2 H(+) = sirohydrochlorin + Fe(2+). Its pathway is cofactor biosynthesis; adenosylcobalamin biosynthesis; precorrin-2 from uroporphyrinogen III: step 1/1. The protein operates within cofactor biosynthesis; adenosylcobalamin biosynthesis; sirohydrochlorin from precorrin-2: step 1/1. It participates in porphyrin-containing compound metabolism; siroheme biosynthesis; precorrin-2 from uroporphyrinogen III: step 1/1. It functions in the pathway porphyrin-containing compound metabolism; siroheme biosynthesis; siroheme from sirohydrochlorin: step 1/1. Its pathway is porphyrin-containing compound metabolism; siroheme biosynthesis; sirohydrochlorin from precorrin-2: step 1/1. Multifunctional enzyme that catalyzes the SAM-dependent methylations of uroporphyrinogen III at position C-2 and C-7 to form precorrin-2 via precorrin-1. Then it catalyzes the NAD-dependent ring dehydrogenation of precorrin-2 to yield sirohydrochlorin. Finally, it catalyzes the ferrochelation of sirohydrochlorin to yield siroheme. This is Siroheme synthase from Acinetobacter baylyi (strain ATCC 33305 / BD413 / ADP1).